The sequence spans 131 residues: Hypocretin neuropeptide precursor (131 aa).

The first 33 residues, Met1–Ala33, serve as a signal peptide directing secretion. Gln34 carries the pyrrolidone carboxylic acid modification. Cystine bridges form between Cys39–Cys45 and Cys40–Cys47. Position 66 is a leucine amide (Leu66). Met97 bears the Methionine amide mark. Positions Gly98–Ile131 are cleaved as a propeptide — removed in mature form.

This sequence belongs to the orexin family. Specific enzymatic cleavages at paired basic residues yield the different active peptides.

It localises to the rough endoplasmic reticulum. Its subcellular location is the cytoplasmic vesicle. It is found in the synapse. In terms of biological role, neuropeptides that play a significant role in the regulation of food intake and sleep-wakefulness, possibly by coordinating the complex behavioral and physiologic responses of these complementary homeostatic functions. A broader role in the homeostatic regulation of energy metabolism, autonomic function, hormonal balance and the regulation of body fluids, is also suggested. Binds to orexin receptors HCRTR1/OX1R and HCRTR2/OX2R with a high affinity. Stimulates food intake. Modulates pituitary luteinizing hormone secretion in an ovarian steroid-dependent manner. Its function is as follows. Binds to orexin receptor HCRTR2/OX2R only. Stimulates food intake. Modulates pituitary luteinizing hormone secretion in an ovarian steroid-dependent manner. In Sus scrofa (Pig), this protein is Hypocretin neuropeptide precursor (HCRT).